Here is a 515-residue protein sequence, read N- to C-terminus: 2-isopropylmalate synthase (515 aa).

The 264-residue stretch at 5–268 (VIIFDTTLRD…VCGIDASQIV (264 aa)) folds into the Pyruvate carboxyltransferase domain. Residues Asp14, His202, His204, and Asn239 each coordinate Mn(2+). Positions 394–515 (HFISLSQHSE…QAKLNAQMAP (122 aa)) are regulatory domain.

It belongs to the alpha-IPM synthase/homocitrate synthase family. LeuA type 1 subfamily. As to quaternary structure, homodimer. It depends on Mn(2+) as a cofactor.

Its subcellular location is the cytoplasm. It catalyses the reaction 3-methyl-2-oxobutanoate + acetyl-CoA + H2O = (2S)-2-isopropylmalate + CoA + H(+). It functions in the pathway amino-acid biosynthesis; L-leucine biosynthesis; L-leucine from 3-methyl-2-oxobutanoate: step 1/4. Functionally, catalyzes the condensation of the acetyl group of acetyl-CoA with 3-methyl-2-oxobutanoate (2-ketoisovalerate) to form 3-carboxy-3-hydroxy-4-methylpentanoate (2-isopropylmalate). The chain is 2-isopropylmalate synthase from Polynucleobacter asymbioticus (strain DSM 18221 / CIP 109841 / QLW-P1DMWA-1) (Polynucleobacter necessarius subsp. asymbioticus).